Reading from the N-terminus, the 333-residue chain is Probable tRNA pseudouridine synthase B (333 aa).

Catalysis depends on D71, which acts as the Nucleophile. One can recognise a PUA domain in the interval 238–313 (LPKIWVRDSA…LVARTDRVVM (76 aa)).

It belongs to the pseudouridine synthase TruB family. Type 2 subfamily.

It catalyses the reaction uridine(55) in tRNA = pseudouridine(55) in tRNA. Could be responsible for synthesis of pseudouridine from uracil-55 in the psi GC loop of transfer RNAs. This Pyrobaculum calidifontis (strain DSM 21063 / JCM 11548 / VA1) protein is Probable tRNA pseudouridine synthase B.